The primary structure comprises 64 residues: MPKVKTKSGAKKRFKLTGSGKIKRKSAYHSHILTKKSTKRKRNLVHAHLVSAADESNVRAMLKI.

The interval 1-28 (MPKVKTKSGAKKRFKLTGSGKIKRKSAY) is disordered.

It belongs to the bacterial ribosomal protein bL35 family.

This chain is Large ribosomal subunit protein bL35, found in Cytophaga hutchinsonii (strain ATCC 33406 / DSM 1761 / CIP 103989 / NBRC 15051 / NCIMB 9469 / D465).